The following is a 597-amino-acid chain: Spastin (597 aa).

Residues M1–F20 lie on the Cytoplasmic side of the membrane. Residues L21–W37 constitute an intramembrane region (helical). At S38–A597 the chain is on the cytoplasmic side. The interval R56–G80 is disordered. Residues H91 to L168 form the MIT domain. The tract at residues S193–V289 is disordered. Residues S214–R231 show a composition bias toward polar residues. Residues S232–S252 show a composition bias toward low complexity.

The protein belongs to the AAA ATPase family. Spastin subfamily. Homohexamer. The homohexamer is stabilized by ATP-binding. The homohexamer may adopt a ring conformation through which microtubules pass prior to being severed. Interacts with microtubules.

The protein resides in the membrane. It is found in the cytoplasm. Its subcellular location is the cytoskeleton. The protein localises to the microtubule organizing center. It localises to the centrosome. The catalysed reaction is n ATP + n H2O + a microtubule = n ADP + n phosphate + (n+1) alpha/beta tubulin heterodimers.. Its function is as follows. ATP-dependent microtubule severing protein. Microtubule severing may promote reorganization of cellular microtubule arrays and the release of microtubules from the microtubule organizing center following nucleation. This Nematostella vectensis (Starlet sea anemone) protein is Spastin.